Here is a 119-residue protein sequence, read N- to C-terminus: Putative yippee-like protein Os10g0369500 (119 aa).

Residues 21-118 (AVLKCRRCRV…LEKARMWKEA (98 aa)) enclose the Yippee domain. Positions 25, 28, 81, and 84 each coordinate Zn(2+).

Belongs to the yippee family.

This chain is Putative yippee-like protein Os10g0369500, found in Oryza sativa subsp. japonica (Rice).